Reading from the N-terminus, the 1006-residue chain is Beta-galactosidase (1006 aa).

The N-terminal stretch at 1-19 (MKLSSACAIALLAAQAAGA) is a signal peptide. An N-linked (GlcNAc...) asparagine glycan is attached at Asn156. Glu200 acts as the Proton donor in catalysis. The active-site Nucleophile is the Glu298. N-linked (GlcNAc...) asparagine glycosylation is found at Asn373, Asn402, Asn422, Asn478, Asn522, Asn622, Asn739, Asn760, Asn777, and Asn805.

The protein belongs to the glycosyl hydrolase 35 family.

The catalysed reaction is Hydrolysis of terminal non-reducing beta-D-galactose residues in beta-D-galactosides.. Functionally, cleaves beta-linked terminal galactosyl residues from gangliosides, glycoproteins, and glycosaminoglycans. The polypeptide is Beta-galactosidase (lacA) (Aspergillus niger).